We begin with the raw amino-acid sequence, 819 residues long: NEDD4-binding protein 1 (819 aa).

Polar residues predominate over residues 1-13; the sequence is MASGSVQSSSGNG. The interval 1 to 20 is disordered; the sequence is MASGSVQSSSGNGRRQAAVV. The 85-residue stretch at 80–164 folds into the KH-like domain; sequence KQAVRRAKEY…VQQFIALFKD (85 aa). Residues 226–241 show a composition bias toward basic and acidic residues; it reads DDKAECKVNQKDEVSR. Disordered regions lie at residues 226–247 and 666–736; these read DDKA…AGTP and KLDD…MAPR. The RNase NYN domain maps to 517 to 669; sequence LKHIIIDGSN…LGRYGPKLDD (153 aa). Residues 673–689 are compositionally biased toward polar residues; that stretch reads KQPNNRTVHSSFPSSNE. The tract at residues 772 to 819 is coCUN; it reads RSPSETMQLKEALLKIFPEADQRHKINEILTAHPFMRDLNALSAMVLD.

Belongs to the N4BP1 family.

It localises to the cytoplasm. The protein resides in the cytosol. The protein localises to the nucleus. Its subcellular location is the nucleolus. It is found in the PML body. In terms of biological role, potent suppressor of cytokine production that acts as a regulator of innate immune signaling and inflammation. Acts as a key negative regulator of select cytokine and chemokine responses elicited by TRIF-independent Toll-like receptors (TLRs), thereby limiting inflammatory cytokine responses to minor insults. Has ribonuclease activity. The polypeptide is NEDD4-binding protein 1 (Xenopus tropicalis (Western clawed frog)).